A 117-amino-acid chain; its full sequence is Non-specific lipid-transfer protein Lac s 1 (117 aa).

The N-terminal stretch at 1 to 25 is a signal peptide; sequence MARMAMMILCVVLTCMVVATPYTEA. Cystine bridges form between C29–C76, C39–C53, C54–C99, and C74–C113.

The protein belongs to the plant LTP family.

In terms of biological role, plant non-specific lipid-transfer proteins transfer phospholipids as well as galactolipids across membranes. May play a role in wax or cutin deposition in the cell walls of expanding epidermal cells and certain secretory tissues. The polypeptide is Non-specific lipid-transfer protein Lac s 1 (Lactuca sativa (Garden lettuce)).